Consider the following 828-residue polypeptide: MQAEDARYLKRKVKGGSIDVHPTEKALVVNYELEATILGEMGDPMLGERKECQKIIRLRSLNSTTDIAALAREVVEKCKLIHPSKLPEVEQLLYYLQNRKETTQKAGAKKGELTGKLKDPPPYEGTELNEVANINDIEDYIELLYEDNPEKVRGTALILQLARNPDNLEELQSNETVLGALARVLREEWKHSVELATNIVYIFFCFSSFSQFHSIVAHFKIGALVMGVVEHELKKHLSWNEELLKKKKTAEENPASKRDFEKSTKKYHGLLKKQEQLLRVSFYLLLNLSEDPKVELKMKNKNIIRLLIKTLERDNAELLILVVSFLKKLGIYVENKNEMAEQQIIERLAKLVPCDHEDLLNITLRLLLNLSFDTDLRGKMIKLGMLPKFVELLANDNHRLVVLCVLYHVSQDDKAKSMFTYTDCIPMIMKMMLESPTERLEIELVALGINLACNKHNAQLICEGNGLRLLMRRALKFRDPLLLKMIRNISQHDGPSKAQFIEYISDVARIIKESNDEELVVEALGIMANLTIPDLDYEMIINEFGLVPWIKEKLEPGAAEDDLVLEVVMLVGTVATDDSCAAMLAKSGIIQSLIELLNAKQEDDEIVCQIVYVFYQMVFHEATREVIIKLTQAPAYLIDLMHDKNSEIRKVCDNTLDIISEFDEEWARKIKLEKFRWHNSQWLEMVESQQIDDGEGGLMYGDESYSPYIQESDILDRPDLFYGQTGYEDGEMYDGQVTPEYVDEYGNVQNGEYLGRPASAMYGNRYQSEYESLRPGSRVAYLTEDGQPLDEYGNPIEVYAESVDQYGRPVTPTYQYGSQAQQGPGYPY.

3 ARM repeats span residues 332 to 372 (YVEN…NLSF), 373 to 411 (DTDL…HVSQ), and 577 to 611 (DDSC…CQIV).

Heterotrimer of a 115 kDa subunit (KAP115) and two kinesin-like subunits of 95 kDa (KRP95) and 85 kDa (KRP85).

In terms of biological role, binds to the tail domain of the KRP85/KRP95 heterodimer to form a heterotrimeric kinesin-II complex and may regulate the spindle vesicle targeting of this complex. The sequence is that of Kinesin-associated protein 3 (KAP115) from Strongylocentrotus purpuratus (Purple sea urchin).